Here is a 1603-residue protein sequence, read N- to C-terminus: Gag-Pol polyprotein (1603 aa).

The segment covering 124-141 (KGEEVGETTAQRDAKMAP) has biased composition (basic and acidic residues). The disordered stretch occupies residues 124-144 (KGEEVGETTAQRDAKMAPEKM). The short motif at 172-175 (PPPY) is the PPXY motif element. Residues 180–184 (LYPSL) carry the LYPX(n)L motif motif. A Nuclear export signal motif is present at residues 219-229 (LTDWARIREEL). 2 CCHC-type zinc fingers span residues 507–524 (GLCYTCGSPGHYQAQCPK) and 533–550 (ERCQLCDGMGHNAKQCRR). The tract at residues 544 to 571 (NAKQCRRRDGNQGQRPGKGLSSGSWPVS) is disordered. The Peptidase A2 domain maps to 609–690 (ITALLDSGAD…VRGSILGRDC (82 aa)). The active-site For protease activity; shared with dimeric partner is the D614. The region spanning 750 to 938 (LQLGHIEPSL…PGVQYLGYKL (189 aa)) is the Reverse transcriptase domain. Residues D815, D890, D891, D1158, E1192, D1213, and D1272 each coordinate Mg(2+). Positions 1149–1280 (PVPGPTAFTD…ADSQATFQAY (132 aa)) constitute an RNase H type-1 domain. The Integrase-type zinc-finger motif lies at 1280 to 1321 (YPLREAKDLHTALHIGPRALSKACNISMQQAREVVQTCPHCN). Zn(2+)-binding residues include H1289, H1293, C1317, and C1320. The Integrase catalytic domain occupies 1333 to 1496 (RGLGPLQIWQ…TPIQKHWRPT (164 aa)). Mg(2+) contacts are provided by D1344, D1401, and E1437. Residues 1502 to 1550 (PPVKIRIETGEWEKGWNVLVWGRGYAAVKNRDTDKVIWVPSRKVKPDVT) constitute a DNA-binding region (integrase-type). The segment at 1548-1567 (DVTQKDEVTKKDEASPLFAG) is involved in homooctamerization. A disordered region spans residues 1566–1603 (AGISDWIPWEDEQEGLQGETASNKQERPGEDTLAANES).

In terms of assembly, active as a homodimer. Homodimer. Homomultimer. Homohexamer. As to quaternary structure, homodimer; further associates as a homooctamer. In terms of assembly, heterodimer of alpha and beta subunits. Three forms of RT exist: alpha-alpha (alpha-Pol), beta-beta (beta-Pol), and alpha-beta, with the major form being the heterodimer. Both the polymerase and RNase H active sites are located in the alpha subunit of heterodimeric RT alpha-beta. The cofactor is Mg(2+). It depends on Mn(2+) as a cofactor. Post-translationally, specific enzymatic cleavages in vivo yield mature proteins. In terms of processing, capsid protein p27: The cleavage at the C-terminus is slowly trimmed by the viral protease, sometimes being cut internally thereby generating the short version of the capsid protein and a capsid protein C-terminally extended by 3 amino acids in a ratio of 2:1.

Its subcellular location is the virion. The enzyme catalyses DNA(n) + a 2'-deoxyribonucleoside 5'-triphosphate = DNA(n+1) + diphosphate. It carries out the reaction Endonucleolytic cleavage to 5'-phosphomonoester.. Functionally, capsid protein p27: Self-associates to form the irregular polyhedron core composed of hexamers and pentamers, that encapsulates the genomic RNA-nucleocapsid complex. Assembles as a tube in vitro. Binds to inositol hexakisphosphate (IP6), which allows the assembly of the polyhedral capsid. Its function is as follows. Spacer peptide: Plays a role in the oligomerization of the Gag polyprotein and in the stabilization of the immature particle. Essential layering element during tube assembly. Binds strongly to viral nucleic acids and promotes their packaging. Plays a role in the maturation-stabilization of the viral dimeric RNA via highly structured zinc-binding motifs. In terms of biological role, the aspartyl protease that mediates proteolytic cleavages of Gag and Gag-Pol polyproteins during or shortly after the release of the virion from the plasma membrane. Cleavages take place as an ordered, step-wise cascade to yield mature proteins. This process is called maturation. Displays maximal activity during the budding process just prior to particle release from the cell. Functionally, catalyzes viral DNA integration into the host chromosome, by performing a series of DNA cutting and joining reactions. This recombination event is an essential step in the viral replication cycle. Has a strong preference for using the 3'-OH at the viral DNA end as a nucleophile. The polypeptide is Gag-Pol polyprotein (gag-pol) (Avian leukosis virus subgroup A (isolate RSA) (ALV-A RSA)).